The chain runs to 189 residues: Phosphomevalonate kinase (189 aa).

Residues Lys-10–Asp-16 and Arg-138 contribute to the ATP site. A substrate-binding site is contributed by Asn-168.

The protein resides in the cytoplasm. The protein localises to the cytosol. The catalysed reaction is (R)-5-phosphomevalonate + ATP = (R)-5-diphosphomevalonate + ADP. It participates in isoprenoid biosynthesis; isopentenyl diphosphate biosynthesis via mevalonate pathway; isopentenyl diphosphate from (R)-mevalonate: step 2/3. The chain is Phosphomevalonate kinase from Drosophila melanogaster (Fruit fly).